The chain runs to 323 residues: Ribokinase (323 aa).

Substrate contacts are provided by residues 26-28, 54-58, and E155; these read MTD and GKGAN. ATP is bound by residues N200, 236–241, and T257; that span reads TLGASG. D264 and T266 together coordinate K(+). ATP is bound by residues 269–270 and N296; that span reads GD. Position 270 (D270) interacts with substrate. The Proton acceptor role is filled by D270. S302, A305, G307, and S311 together coordinate K(+).

Belongs to the carbohydrate kinase PfkB family. Ribokinase subfamily. In terms of assembly, homodimer. Mg(2+) is required as a cofactor.

The protein localises to the cytoplasm. Its subcellular location is the nucleus. The catalysed reaction is D-ribose + ATP = D-ribose 5-phosphate + ADP + H(+). It functions in the pathway carbohydrate metabolism; D-ribose degradation; D-ribose 5-phosphate from beta-D-ribopyranose: step 2/2. With respect to regulation, activated by a monovalent cation that binds near, but not in, the active site. The most likely occupant of the site in vivo is potassium. Ion binding induces a conformational change that may alter substrate affinity. Competitively inhibited by phosphonoacetic acid, etidronate, 2-carboxethylphosphonic acid, N-(phosphonomethyl)glycine, N-(phosphonomethyl)iminodiacetic acid and clodronate. Catalyzes the phosphorylation of ribose at O-5 in a reaction requiring ATP and magnesium. The resulting D-ribose-5-phosphate can then be used either for sythesis of nucleotides, histidine, and tryptophan, or as a component of the pentose phosphate pathway. The chain is Ribokinase from Mus musculus (Mouse).